Reading from the N-terminus, the 775-residue chain is uncharacterized protein (775 aa).

The next 5 membrane-spanning stretches (helical) occupy residues 16–36, 585–605, 625–645, 655–675, and 742–762; these read KLLIPIIAILFVPLIYSGVFL, PYILSMGLYVGGIMLTVVFPL, VMMLVGIIQSLIVATVLLLGI, FYVFTIITSLAFLAIIQFLAT, and GVLIGIALVMIALSITYFTML.

To L.lactis phage infection protein (PIP).

The protein localises to the cell membrane. This is an uncharacterized protein from Bacillus subtilis (strain 168).